Reading from the N-terminus, the 395-residue chain is Phosphoglycerate kinase (395 aa).

Residues 21–23 (DIN), Arg-36, 59–62 (HFGR), Arg-114, and Arg-147 each bind substrate. Residues Lys-197, Glu-322, and 352–355 (GGDT) each bind ATP.

The protein belongs to the phosphoglycerate kinase family. Monomer.

The protein localises to the cytoplasm. The catalysed reaction is (2R)-3-phosphoglycerate + ATP = (2R)-3-phospho-glyceroyl phosphate + ADP. It participates in carbohydrate degradation; glycolysis; pyruvate from D-glyceraldehyde 3-phosphate: step 2/5. This chain is Phosphoglycerate kinase, found in Roseobacter denitrificans (strain ATCC 33942 / OCh 114) (Erythrobacter sp. (strain OCh 114)).